We begin with the raw amino-acid sequence, 211 residues long: SsrA-binding protein (211 aa).

Disordered regions lie at residues 1 to 20 (MHRRSSKSYSSRNSKTPERS) and 170 to 211 (RLRR…RHEN). The span at 177–187 (QRNTQRSVTPR) shows a compositional bias: polar residues.

This sequence belongs to the SmpB family.

It localises to the cytoplasm. In terms of biological role, required for rescue of stalled ribosomes mediated by trans-translation. Binds to transfer-messenger RNA (tmRNA), required for stable association of tmRNA with ribosomes. tmRNA and SmpB together mimic tRNA shape, replacing the anticodon stem-loop with SmpB. tmRNA is encoded by the ssrA gene; the 2 termini fold to resemble tRNA(Ala) and it encodes a 'tag peptide', a short internal open reading frame. During trans-translation Ala-aminoacylated tmRNA acts like a tRNA, entering the A-site of stalled ribosomes, displacing the stalled mRNA. The ribosome then switches to translate the ORF on the tmRNA; the nascent peptide is terminated with the 'tag peptide' encoded by the tmRNA and targeted for degradation. The ribosome is freed to recommence translation, which seems to be the essential function of trans-translation. The chain is SsrA-binding protein from Tropheryma whipplei (strain TW08/27) (Whipple's bacillus).